The sequence spans 351 residues: Hydroxymethylglutaryl-CoA synthase (351 aa).

Aspartate 30 is a binding site for (3S)-3-hydroxy-3-methylglutaryl-CoA. The active-site Proton donor/acceptor is glutamate 82. (3S)-3-hydroxy-3-methylglutaryl-CoA is bound by residues cysteine 114, serine 155, threonine 203, and histidine 236. Cysteine 114 acts as the Acyl-thioester intermediate in catalysis. Histidine 236 serves as the catalytic Proton donor/acceptor. Arginine 241 serves as a coordination point for CoA. Positions 245, 268, and 298 each coordinate (3S)-3-hydroxy-3-methylglutaryl-CoA.

This sequence belongs to the thiolase-like superfamily. Archaeal HMG-CoA synthase family. Interacts with acetoacetyl-CoA thiolase that catalyzes the precedent step in the pathway and with a DUF35 protein. The acetoacetyl-CoA thiolase/HMG-CoA synthase complex channels the intermediate via a fused CoA-binding site, which allows for efficient coupling of the endergonic thiolase reaction with the exergonic HMGCS reaction.

The catalysed reaction is acetoacetyl-CoA + acetyl-CoA + H2O = (3S)-3-hydroxy-3-methylglutaryl-CoA + CoA + H(+). It participates in metabolic intermediate biosynthesis; (R)-mevalonate biosynthesis; (R)-mevalonate from acetyl-CoA: step 2/3. Its function is as follows. Catalyzes the condensation of acetyl-CoA with acetoacetyl-CoA to form 3-hydroxy-3-methylglutaryl-CoA (HMG-CoA). Functions in the mevalonate (MVA) pathway leading to isopentenyl diphosphate (IPP), a key precursor for the biosynthesis of isoprenoid compounds that are building blocks of archaeal membrane lipids. The protein is Hydroxymethylglutaryl-CoA synthase of Pyrobaculum neutrophilum (strain DSM 2338 / JCM 9278 / NBRC 100436 / V24Sta) (Thermoproteus neutrophilus).